Here is a 324-residue protein sequence, read N- to C-terminus: Acetyl-coenzyme A carboxylase carboxyl transferase subunit alpha (324 aa).

The region spanning 37 to 291 (KLDKRLDRLK…QEYVLQEWLK (255 aa)) is the CoA carboxyltransferase C-terminal domain.

This sequence belongs to the AccA family. In terms of assembly, acetyl-CoA carboxylase is a heterohexamer composed of biotin carboxyl carrier protein (AccB), biotin carboxylase (AccC) and two subunits each of ACCase subunit alpha (AccA) and ACCase subunit beta (AccD).

It localises to the cytoplasm. It catalyses the reaction N(6)-carboxybiotinyl-L-lysyl-[protein] + acetyl-CoA = N(6)-biotinyl-L-lysyl-[protein] + malonyl-CoA. Its pathway is lipid metabolism; malonyl-CoA biosynthesis; malonyl-CoA from acetyl-CoA: step 1/1. Functionally, component of the acetyl coenzyme A carboxylase (ACC) complex. First, biotin carboxylase catalyzes the carboxylation of biotin on its carrier protein (BCCP) and then the CO(2) group is transferred by the carboxyltransferase to acetyl-CoA to form malonyl-CoA. The chain is Acetyl-coenzyme A carboxylase carboxyl transferase subunit alpha from Chlamydia trachomatis serovar D (strain ATCC VR-885 / DSM 19411 / UW-3/Cx).